Reading from the N-terminus, the 1741-residue chain is Meiosis regulator and mRNA stability factor 1 (1741 aa).

In terms of domain architecture, NYN spans 345-482; the sequence is IGVFWDIENC…ALLHHAHELV (138 aa). 3 disordered regions span residues 594–636, 659–678, and 683–716; these read KVKS…GSVI, TENHQEHLREIPSQNNSHAA, and LTTKKSGVGESSCKSSYKKETSVSRSMTNSPVDK. The span at 659–668 shows a compositional bias: basic and acidic residues; that stretch reads TENHQEHLRE. The RRM domain maps to 788-867; that stretch reads ADIQISNIDY…KRIQVSLATG (80 aa). HTH OST-type domains follow at residues 872–946, 1000–1076, 1097–1171, 1173–1248, 1257–1332, 1333–1408, 1409–1483, and 1484–1558; these read SLSL…SPLG, SLKT…HNKP, QLIQ…LTHR, QVKR…IPKR, RTKQ…TEVE, QVKA…INRK, SLRT…VRLT, and NLYM…LKND. Residues 1684–1700 are compositionally biased toward polar residues; the sequence is KLTSGSVASSTAENTSV. The interval 1684–1727 is disordered; that stretch reads KLTSGSVASSTAENTSVPPRHSSETQLNKEAMDSPAKKQHKNKV.

The protein localises to the peroxisome. Functionally, essential regulator of oogenesis required for female meiotic progression to repress transposable elements and preventing their mobilization, which is essential for the germline integrity. In Gallus gallus (Chicken), this protein is Meiosis regulator and mRNA stability factor 1.